A 68-amino-acid chain; its full sequence is DNA-directed RNA polymerase subunit omega (68 aa).

It belongs to the RNA polymerase subunit omega family. In terms of assembly, the RNAP catalytic core consists of 2 alpha, 1 beta, 1 beta' and 1 omega subunit. When a sigma factor is associated with the core the holoenzyme is formed, which can initiate transcription.

The catalysed reaction is RNA(n) + a ribonucleoside 5'-triphosphate = RNA(n+1) + diphosphate. In terms of biological role, promotes RNA polymerase assembly. Latches the N- and C-terminal regions of the beta' subunit thereby facilitating its interaction with the beta and alpha subunits. The protein is DNA-directed RNA polymerase subunit omega of Dechloromonas aromatica (strain RCB).